The chain runs to 195 residues: HTH-type transcriptional regulator BetI (195 aa).

Positions 8–68 (SIRRRQLIDA…ATMRDITSQL (61 aa)) constitute an HTH tetR-type domain. Positions 31–50 (TIAQIARRAGVSTGIISHYF) form a DNA-binding region, H-T-H motif.

The protein operates within amine and polyamine biosynthesis; betaine biosynthesis via choline pathway [regulation]. In terms of biological role, repressor involved in the biosynthesis of the osmoprotectant glycine betaine. It represses transcription of the choline transporter BetT and the genes of BetAB involved in the synthesis of glycine betaine. This is HTH-type transcriptional regulator BetI from Escherichia coli (strain UTI89 / UPEC).